Reading from the N-terminus, the 901-residue chain is Nuclear factor of activated T-cells, cytoplasmic 4 (901 aa).

Disordered regions lie at residues 15–179 and 203–362; these read LVFG…LSSW and NEAA…EDSV. Positions 61 to 81 are enriched in pro residues; that stretch reads IPRPPPPRPGMHSPPPRPAPS. A compositionally biased stretch (gly residues) spans 96 to 109; it reads GGPGGNAGGAGGGR. The calcineurin-binding stretch occupies residues 114–119; that stretch reads PSIRIT. Residues 114-123 show a composition bias toward low complexity; sequence PSIRITSISP. Residues 151–165 show a composition bias toward gly residues; it reads GFGGYREAGGQGGGA. Residues 166–179 show a composition bias toward low complexity; it reads FFSPSPGSSSLSSW. Residues Ser-168 and Ser-170 each carry the phosphoserine; by MAPK7 and MAPK14 modification. 2 positions are modified to phosphoserine; by MAPK8 and MAPK9: Ser-213 and Ser-217. The SP 1 repeat unit spans residues 213-229; sequence SPLPSPRASPRPWTPED. The interval 213-293 is 2 approximate SP repeats; the sequence is SPLPSPRASP…LSRRGSLGEE (81 aa). Pro residues-rich tracts occupy residues 215 to 227 and 254 to 263; these read LPSPRASPRPWTP and GPVPASPRPA. Residues 268–270 carry the Nuclear localization signal motif; it reads KRR. Residues 272–288 are compositionally biased toward low complexity; sequence SSSGTPSSASPALSRRG. An SP 2; approximate repeat occupies 277–293; it reads PSSASPALSRRGSLGEE. Residue Ser-289 is modified to Phosphoserine. The residue at position 334 (Ser-334) is a Phosphoserine; by RPS6KA3. Ser-344 is subject to Phosphoserine. The 182-residue stretch at 401–582 folds into the RHD domain; the sequence is SALPPLDWPL…VPIECSQRSA (182 aa). A DNA-binding region spans residues 430–437; sequence RAHYETEG. Residues 586 to 683 enclose the IPT/TIG domain; that stretch reads PQVETYSPSA…KRSPTQSFKF (98 aa). Positions 672–674 match the Nuclear localization signal motif; the sequence is RRK. Lys-689 participates in a covalent cross-link: Glycyl lysine isopeptide (Lys-Gly) (interchain with G-Cter in SUMO2). Disordered regions lie at residues 695–721 and 827–869; these read DSSLRGFPSTSGPPFGPDVDFSPPRPP and PQSA…FRDS.

In terms of assembly, member of the multicomponent NFATC transcription complex that consists of at least two components, a pre-existing cytoplasmic component NFATC2 and an inducible nuclear component NFATC1. Other NFAT proteins, such as NFATC3, or members of the activating protein-1 (AP-1) family and MAF can also bind the complex. NFAT proteins can bind DNA as monomers or dimers. Component of a promoter-binding complex composed of STAT3, NFATC3 and NFATC4; complex formation is enhanced by calcineurin. Interacts with CREBBP; this interaction potentiates transcription activation. Interacts with MAPK8/JNK1 and MAPK9/JNK2. Interacts with GATA4 (via the second Zn finger). Interacts (via N-terminus) with IRAK1 (via C-terminus). Interacts with RPS6KA3. Interacts with HOMER1, HOMER2 and HOMER3; this interaction competes with calcineurin/PPP3CA-binding and hence prevents NFATC4 dephosphorylation and activation. Interacts with ESR1 and ESR2; this interaction decreases NFATC4 transcriptional activity. Interacts with MTOR and MAPK7/ERK5. Interacts with TRIM17; this interaction prevents NFATC3 nuclear localization. Interacts with TCF25 (via C-terminus); the interaction leads to suppression of NFATC4 transcription factor activity and is reduced following stimulation with angiotensin-2. Phosphorylated by NFATC-kinases; dephosphorylated by calcineurin/PPP3CA. Phosphorylated on Ser-168 and Ser-170 by MTOR, IRAK1, MAPK7/ERK5 and MAPK14/p38, on Ser-213 and Ser-217 by MAPK8 and MAPK9, and on Ser-289 and Ser-344 by RPS6KA3. Phosphorylated by GSK3B. Phosphorylation by GSK3B markedly increases NFATC4 ubiquitination. Phosphorylation by MAPK8/JNK1, MAPK9/JNK2 and RPS6KA3 may stimulate NFATC4 transcriptional activity. Phosphorylation at Ser-168 and Ser-170 is stimulated by UV irradiation. Post-translationally, ubiquitinated, leading to degradation by the proteasome. Ubiquitination may be stimulated by GSK3B-dependent phosphorylation. Polyubiquitin linkage mainly occurs through 'Lys-48'. As to expression, widely expressed. In the brain, expressed in neurons. Expressed in the hippocampus (at protein level). In the hippocampus, expressed in both the CA1-CA3 pyramidal cells and the dentate gyrus granular cells. Expressed in a subset of hippocampal cells representing adult-born neurons (at protein level). Expressed in the submandibular gland (at protein level). In the olfactory system, expressed at low levels in the glomerular and granular layers and in the mitral cell layer. In the cerebellum, expressed at moderate levels in granular neurons. Expressed at moderate levels in the choroid plexus and ependymal cells. Expressed in neurons of the cochlear nucleus (at protein level). Expressed at low levels in the heart (at protein level). Expressed in ventricular cardiomyocytes (at protein level). Expressed in the lung.

Its subcellular location is the cytoplasm. It is found in the nucleus. In terms of biological role, ca(2+)-regulated transcription factor that is involved in several processes, including the development and function of the immune, cardiovascular, musculoskeletal, and nervous systems. Involved in T-cell activation, stimulating the transcription of cytokine genes, including that of IL2 and IL4. Following JAK/STAT signaling activation and as part of a complex with NFATC3 and STAT3, binds to the alpha-beta E4 promoter region of CRYAB and activates transcription in cardiomyocytes. Along with NFATC3, involved in embryonic heart development. Involved in mitochondrial energy metabolism required for cardiac morphogenesis and function. Transactivates many genes involved in heart physiology. Along with GATA4, binds to and activates NPPB/BNP promoter. Activates NPPA/ANP/ANF and MYH7/beta-MHC transcription. Binds to and transactivates AGTR2 gene promoter. Involved in the regulation of adult hippocampal neurogenesis. Involved in BDNF-driven pro-survival signaling in hippocampal adult-born neurons. Involved in the formation of long-term spatial memory and long-term potentiation. In cochlear nucleus neurons, may play a role in deafferentation-induced apoptosis during a developmental critical period when auditory neurons depend on afferent input for survival. Binds to and activates the BACE1/Beta-secretase 1 promoter, hence may regulate the proteolytic processing of the amyloid precursor protein (APP). Plays a role in adipocyte differentiation. May be involved in myoblast differentiation into myotubes. Binds the consensus DNA sequence 5'-GGAAAAT-3'. In the presence of CREBBP, activates TNF transcription. Binds to PPARG gene promoter and regulates its activity. Binds to PPARG and REG3G gene promoters. The protein is Nuclear factor of activated T-cells, cytoplasmic 4 of Mus musculus (Mouse).